The primary structure comprises 144 residues: EF-hand calcium-binding domain-containing protein 8 (144 aa).

2 consecutive EF-hand domains span residues 52–86 (IHLAKIEKMFEEDINSTGALGMDAFIKAMKKVLSS) and 87–122 (VSDEMLKELFLKVDSDCEGFVTWQKYVDYMMREFQG).

This chain is EF-hand calcium-binding domain-containing protein 8 (EFCAB8), found in Homo sapiens (Human).